A 73-amino-acid chain; its full sequence is Neurogranin (73 aa).

The IQ domain occupies 26 to 55; sequence ANAAAAKIQASFRGHMTRKKIKGGEIDRKT. The residue at position 36 (serine 36) is a Phosphoserine; by PKC. Over residues 47-59 the composition is skewed to basic and acidic residues; the sequence is KGGEIDRKTKDAE. Residues 47-73 form a disordered region; sequence KGGEIDRKTKDAECANSTRGGDLRNGD.

Belongs to the neurogranin family.

Acts as a 'third messenger' substrate of protein kinase C-mediated molecular cascades during synaptic development and remodeling. Binds to calmodulin in the absence of calcium. This Serinus canaria (Island canary) protein is Neurogranin (NRGN).